Here is a 656-residue protein sequence, read N- to C-terminus: Threonine--tRNA ligase (656 aa).

One can recognise a TGS domain in the interval 1–64; it reads MAEAASLTFP…ERSGKIEIIT (64 aa). The catalytic stretch occupies residues 246–548; it reads DHRRLGREMD…LIENYAGHFP (303 aa). Positions 342, 393, and 525 each coordinate Zn(2+).

Belongs to the class-II aminoacyl-tRNA synthetase family. As to quaternary structure, homodimer. The cofactor is Zn(2+).

The protein localises to the cytoplasm. The catalysed reaction is tRNA(Thr) + L-threonine + ATP = L-threonyl-tRNA(Thr) + AMP + diphosphate + H(+). Functionally, catalyzes the attachment of threonine to tRNA(Thr) in a two-step reaction: L-threonine is first activated by ATP to form Thr-AMP and then transferred to the acceptor end of tRNA(Thr). Also edits incorrectly charged L-seryl-tRNA(Thr). The chain is Threonine--tRNA ligase from Chelativorans sp. (strain BNC1).